Here is a 551-residue protein sequence, read N- to C-terminus: HTH-type transcriptional regulator SgrR (551 aa).

Residues 1-116 (MPSARLQQQF…LVSHLGRSFR (116 aa)) enclose the HTH marR-type domain. The H-T-H motif DNA-binding region spans 26 to 49 (LNELAALLSCSRRHMRTLLNTMQD). The interval 163 to 492 (ELEADIAHHW…IDWQADAARW (330 aa)) is solute-binding.

Its function is as follows. Activates the small RNA gene sgrS under glucose-phosphate stress conditions as well as yfdZ. Represses its own transcription under both stress and non-stress conditions. Might act as a sensor of the intracellular accumulation of phosphoglucose by binding these molecules in its C-terminal solute-binding domain. The polypeptide is HTH-type transcriptional regulator SgrR (Escherichia coli O1:K1 / APEC).